A 254-amino-acid chain; its full sequence is Very-long-chain (3R)-3-hydroxyacyl-CoA dehydratase 2 (254 aa).

Ala2 carries the post-translational modification N-acetylalanine. Topologically, residues 2-41 (AAVAATAAAKGNGGGGGRAGAGDASGTRKKKGPGPLATAY) are cytoplasmic. A disordered region spans residues 11-33 (KGNGGGGGRAGAGDASGTRKKKG). Residues 12–21 (GNGGGGGRAG) show a composition bias toward gly residues. The helical transmembrane segment at 42 to 60 (LVIYNVVMTAGWLVIAVGL) threads the bilayer. Over 61 to 79 (VRAYLAKGSYHSLYYSIEK) the chain is Lumenal. A helical transmembrane segment spans residues 80–97 (PLKFFQTGALLEILHCAI). The Cytoplasmic portion of the chain corresponds to 98-107 (GIVPSSVVLT). The helical transmembrane segment at 108-125 (SFQVMSRVFLIWAVTHSV) threads the bilayer. Residues 126-130 (KEVQS) lie on the Lumenal side of the membrane. Residues 131–146 (EDSVLLFVIAWTITEI) form a helical membrane-spanning segment. Residues 147-169 (IRYSFYTFSLLNHLPYLIKWARY) are Cytoplasmic-facing. A helical transmembrane segment spans residues 170-187 (TLFIVLYPMGVSGELLTI). Active-site residues include Tyr176 and Glu183. The Lumenal segment spans residues 188–217 (YAALPFVRQAGLYSISLPNKYNFSFDYYAF). The segment at 198 to 214 (GLYSISLPNKYNFSFDY) is may be involved in interaction with TECR. Asn209 is a glycosylation site (N-linked (GlcNAc...) asparagine). The chain crosses the membrane as a helical span at residues 218–235 (LILIMISYIPIFPQLYFH). The Cytoplasmic segment spans residues 236 to 254 (MIHQRRKILSHTEEHKKFE).

Belongs to the very long-chain fatty acids dehydratase HACD family. May interact with enzymes of the ELO family (including ELOVL1); with those enzymes that mediate condensation, the first of the four steps of the reaction cycle responsible for fatty acids elongation, may be part of a larger fatty acids elongase complex. Interacts with BCAP31. Interacts (via the third lumenal loop) with TECR. In terms of tissue distribution, highly expressed in testis, spleen, prostate, colon and heart, followed by moderate expression in thymus, ovary, small intestine, peripheral blood leukocytes, liver, skeletal muscle and pancreas. Weakly detected in kidney, placenta, brain and lung.

The protein localises to the endoplasmic reticulum membrane. The catalysed reaction is a very-long-chain (3R)-3-hydroxyacyl-CoA = a very-long-chain (2E)-enoyl-CoA + H2O. The enzyme catalyses (3R)-hydroxyhexadecanoyl-CoA = (2E)-hexadecenoyl-CoA + H2O. It carries out the reaction (3R)-hydroxyoctadecanoyl-CoA = (2E)-octadecenoyl-CoA + H2O. It catalyses the reaction (3R)-hydroxyeicosanoyl-CoA = (2E)-eicosenoyl-CoA + H2O. The catalysed reaction is (3R)-hydroxydocosanoyl-CoA = (2E)-docosenoyl-CoA + H2O. The enzyme catalyses (3R)-hydroxytetracosanoyl-CoA = (2E)-tetracosenoyl-CoA + H2O. It carries out the reaction (3R)-hydroxyhexacosanoyl-CoA = (2E)-hexacosenoyl-CoA + H2O. The protein operates within lipid metabolism; fatty acid biosynthesis. In terms of biological role, catalyzes the third of the very long-chain fatty acids (VLCFA) elongation four-step cycle (condensation, reduction, dehydration, and reduction). This endoplasmic reticulum-elongation process is characterized by the addition of two carbons to the lipid chain through each cycle. This enzyme catalyzes the dehydration of the 3-hydroxyacyl-CoA intermediate into trans-2,3-enoyl-CoA, within each cycle of elongation. Therefore, it participates in the production of various VLCFAs involved in multiple biological processes as precursors of membrane lipids and lipid mediators. The protein is Very-long-chain (3R)-3-hydroxyacyl-CoA dehydratase 2 of Homo sapiens (Human).